The sequence spans 173 residues: Photosystem I assembly protein Ycf3 (173 aa).

TPR repeat units lie at residues 36-69 (AFAY…EQDD), 73-106 (SYIL…NPRL), and 121-154 (GEQS…APNN).

Belongs to the Ycf3 family.

Its subcellular location is the cellular thylakoid membrane. Essential for the assembly of the photosystem I (PSI) complex. May act as a chaperone-like factor to guide the assembly of the PSI subunits. The chain is Photosystem I assembly protein Ycf3 from Synechococcus sp. (strain JA-3-3Ab) (Cyanobacteria bacterium Yellowstone A-Prime).